The primary structure comprises 297 residues: Vacuolar protein sorting-associated protein 26 (297 aa).

It belongs to the VPS26 family. Component of the retromer complex, composed of VPS26, VPS29 and VPS35. As part of the retromer complex, interacts with the sorting receptor SORTLR/sortilin. Interacts with GTPase RAB7.

Plays a role in vesicular protein sorting. Component of the membrane-associated retromer complex which is essential in endosome-to-Golgi retrograde transport. This Plasmodium falciparum (isolate 3D7) protein is Vacuolar protein sorting-associated protein 26.